The chain runs to 892 residues: Alanine--tRNA ligase (892 aa).

The Zn(2+) site is built by histidine 594, histidine 598, cysteine 702, and histidine 706.

The protein belongs to the class-II aminoacyl-tRNA synthetase family. It depends on Zn(2+) as a cofactor.

The protein resides in the cytoplasm. The enzyme catalyses tRNA(Ala) + L-alanine + ATP = L-alanyl-tRNA(Ala) + AMP + diphosphate. Its function is as follows. Catalyzes the attachment of alanine to tRNA(Ala) in a two-step reaction: alanine is first activated by ATP to form Ala-AMP and then transferred to the acceptor end of tRNA(Ala). Also edits incorrectly charged Ser-tRNA(Ala) and Gly-tRNA(Ala) via its editing domain. The polypeptide is Alanine--tRNA ligase (Pyrobaculum neutrophilum (strain DSM 2338 / JCM 9278 / NBRC 100436 / V24Sta) (Thermoproteus neutrophilus)).